A 253-amino-acid chain; its full sequence is Sulfate transporter CysZ (253 aa).

A run of 4 helical transmembrane segments spans residues 31–51 (FVIL…WWLF), 75–95 (LLWP…FSTI), 151–171 (IVLL…PVLW), and 222–242 (IPLL…AMWV).

Belongs to the CysZ family.

Its subcellular location is the cell inner membrane. High affinity, high specificity proton-dependent sulfate transporter, which mediates sulfate uptake. Provides the sulfur source for the cysteine synthesis pathway. In Escherichia coli O81 (strain ED1a), this protein is Sulfate transporter CysZ.